The primary structure comprises 382 residues: Protein arginine N-methyltransferase 2 (382 aa).

2 ANK repeats span residues 22–46 and 48–80; these read AAQTAAPSVLADLLAEGAPAWFQDD and LGWSCLHYAAERKEPECLEVLLQGGAVWNAVDK. Residues 134 to 382 form the RMT2 domain; the sequence is KTSAGDNLVF…RLPIAKMSLI (249 aa). S-adenosyl-L-methionine-binding positions include Phe-143, Met-177, 205–210, 228–230, 255–256, and Asp-284; these read FGLGIV, EAH, and WQ.

This sequence belongs to the class I-like SAM-binding methyltransferase superfamily. RMT2 methyltransferase family. Monomer.

The protein resides in the cytoplasm. Its subcellular location is the nucleus. Its function is as follows. S-adenosyl-L-methionine-dependent protein-arginine N-methyltransferase that methylates the delta-nitrogen atom of arginine residues to form N5-methylarginine (type IV) in target proteins. Monomethylates ribosomal protein L12. In Cryptococcus neoformans var. neoformans serotype D (strain JEC21 / ATCC MYA-565) (Filobasidiella neoformans), this protein is Protein arginine N-methyltransferase 2.